Here is a 331-residue protein sequence, read N- to C-terminus: Cytosolic arginine sensor for mTORC1 subunit 1 (331 aa).

Ser14 carries the phosphoserine modification. ACT domains lie at 72–137 (AEAT…HTLA) and 259–320 (GELW…DILQ). Residues 110-111 (SV), Gly273, 279-280 (IV), and 299-303 (TFNFD) each bind L-arginine.

Belongs to the GATS family. Forms homodimers and heterodimers with CASTOR2. Interacts with the GATOR2 complex which is composed of MIOS, SEC13, SEH1L, WDR24 and WDR59; the interaction is negatively regulated by arginine. Interacts with TM4SF5; the interaction is positively regulated by leucine and is negatively regulated by arginine. Phosphorylation at Ser-14 by AKT1, promoting the interaction between CASTOR1 and RNF167. Post-translationally, ubiquitinated by RNF167 via 'Lys-29'-polyubiquitination, leading to its degradation, releasing the GATOR2 complex. Ubiquitination by RNF167 is promoted by phosphorylation at Ser-14 by AKT1.

Its subcellular location is the cytoplasm. The protein resides in the cytosol. In terms of biological role, functions as an intracellular arginine sensor within the amino acid-sensing branch of the TORC1 signaling pathway. As a homodimer or a heterodimer with CASTOR2, binds and inhibits the GATOR subcomplex GATOR2 and thereby mTORC1. Binding of arginine to CASTOR1 allosterically disrupts the interaction of CASTOR1-containing dimers with GATOR2 which can in turn activate mTORC1 and the TORC1 signaling pathway. This Mus musculus (Mouse) protein is Cytosolic arginine sensor for mTORC1 subunit 1.